Reading from the N-terminus, the 269-residue chain is Phosphonates import ATP-binding protein PhnC 2 (269 aa).

The region spanning 2 to 246 (LRIDSLSKRY…VLNEIYGEED (245 aa)) is the ABC transporter domain. An ATP-binding site is contributed by 35 to 42 (GPSGAGKS). The segment at 246-269 (DWNASGPAQDSEENEAVSAGVATH) is disordered.

This sequence belongs to the ABC transporter superfamily. Phosphonates importer (TC 3.A.1.9.1) family. The complex is composed of two ATP-binding proteins (PhnC), two transmembrane proteins (PhnE) and a solute-binding protein (PhnD).

It localises to the cell inner membrane. The enzyme catalyses phosphonate(out) + ATP + H2O = phosphonate(in) + ADP + phosphate + H(+). Functionally, part of the ABC transporter complex PhnCDE involved in phosphonates import. Responsible for energy coupling to the transport system. The polypeptide is Phosphonates import ATP-binding protein PhnC 2 (Synechococcus sp. (strain JA-2-3B'a(2-13)) (Cyanobacteria bacterium Yellowstone B-Prime)).